The following is a 146-amino-acid chain: Snaclec agkicetin-C subunit beta (146 aa).

Residues 1 to 23 form the signal peptide; it reads MGRFIFVSFGLLVVFLSLSGTGA. Intrachain disulfides connect Cys25/Cys36, Cys53/Cys142, and Cys119/Cys134. The region spanning 32 to 143 is the C-type lectin domain; the sequence is YEGNCYLVVK…CSRTQPFVCK (112 aa).

This sequence belongs to the snaclec family. In terms of assembly, heterodimer of subunits alpha and beta; disulfide-linked. In terms of tissue distribution, expressed by the venom gland.

It is found in the secreted. Is a potent glycoprotein Ibalpha (GP1BA) antagonist. Concentration-dependently inhibits botrocetin-, ristocetin- and low dose thrombin-induced platelet aggregation. Inhibits platelet adhesion only through inhibiting the vWF interaction with GP1BA, but has minimal effect on other platelet receptors, such as alpha-IIb/beta-3 (ITGA2B/ITGB3) or alpha-2/beta-1 (ITGA2/ITGB1). Causes an instant severe thrombocytopenia in rats and is not lethal to mice. The sequence is that of Snaclec agkicetin-C subunit beta from Deinagkistrodon acutus (Hundred-pace snake).